The chain runs to 69 residues: Putative membrane protein insertion efficiency factor (69 aa).

The protein belongs to the UPF0161 family.

It localises to the cell membrane. Functionally, could be involved in insertion of integral membrane proteins into the membrane. This Clostridium beijerinckii (strain ATCC 51743 / NCIMB 8052) (Clostridium acetobutylicum) protein is Putative membrane protein insertion efficiency factor.